The sequence spans 62 residues: uncharacterized protein (62 aa).

It belongs to the asfivirus C62L family.

This is an uncharacterized protein from African swine fever virus (strain Badajoz 1971 Vero-adapted) (Ba71V).